Reading from the N-terminus, the 444-residue chain is 23S rRNA (uracil(1939)-C(5))-methyltransferase RlmD (444 aa).

A TRAM domain is found at 5–64; the sequence is KPKLNLTSQTARIVNLSHDGRGIARVNGKATFIQGALPGEVVEFQYTRIKKDFDEGKLLS. Positions 77, 83, 86, and 166 each coordinate [4Fe-4S] cluster. 6 residues coordinate S-adenosyl-L-methionine: glutamine 276, phenylalanine 305, asparagine 310, glutamate 326, asparagine 353, and aspartate 374. Cysteine 400 (nucleophile) is an active-site residue.

Belongs to the class I-like SAM-binding methyltransferase superfamily. RNA M5U methyltransferase family. RlmD subfamily.

It catalyses the reaction uridine(1939) in 23S rRNA + S-adenosyl-L-methionine = 5-methyluridine(1939) in 23S rRNA + S-adenosyl-L-homocysteine + H(+). In terms of biological role, catalyzes the formation of 5-methyl-uridine at position 1939 (m5U1939) in 23S rRNA. In Legionella pneumophila (strain Corby), this protein is 23S rRNA (uracil(1939)-C(5))-methyltransferase RlmD.